The chain runs to 195 residues: dCTP deaminase (195 aa).

DCTP contacts are provided by residues 110–115 (RSSLAR), Asp128, 136–138 (VLE), Tyr171, Lys178, and Gln182. The active-site Proton donor/acceptor is Glu138. The segment at 171 to 195 (YSSRKDAKYKNQQSAVASRIDEDKE) is disordered.

Belongs to the dCTP deaminase family. In terms of assembly, homotrimer.

It catalyses the reaction dCTP + H2O + H(+) = dUTP + NH4(+). It participates in pyrimidine metabolism; dUMP biosynthesis; dUMP from dCTP (dUTP route): step 1/2. Functionally, catalyzes the deamination of dCTP to dUTP. The chain is dCTP deaminase from Haemophilus influenzae (strain ATCC 51907 / DSM 11121 / KW20 / Rd).